A 430-amino-acid polypeptide reads, in one-letter code: mRNA cap guanine-N(7) methyltransferase (430 aa).

A disordered region spans residues 1-88 (MALRPEKPVW…YDLEERKKKQ (88 aa)). Residues 15 to 37 (QYDRQYGKLEEPKPPREESKPGD) are compositionally biased toward basic and acidic residues. Positions 136-419 (SPIIKLRNFN…FYTVFAFRKV (284 aa)) constitute an mRNA cap 0 methyltransferase domain. Residue 145–146 (NN) coordinates mRNA. Lys149, Gly167, Asp189, Asp218, Gln244, and Tyr249 together coordinate S-adenosyl-L-methionine.

It belongs to the class I-like SAM-binding methyltransferase superfamily. mRNA cap 0 methyltransferase family.

Its subcellular location is the nucleus. The catalysed reaction is a 5'-end (5'-triphosphoguanosine)-ribonucleoside in mRNA + S-adenosyl-L-methionine = a 5'-end (N(7)-methyl 5'-triphosphoguanosine)-ribonucleoside in mRNA + S-adenosyl-L-homocysteine. Its function is as follows. Responsible for methylating the 5'-cap structure of mRNAs. This Eremothecium gossypii (strain ATCC 10895 / CBS 109.51 / FGSC 9923 / NRRL Y-1056) (Yeast) protein is mRNA cap guanine-N(7) methyltransferase (ABD1).